The sequence spans 158 residues: Superoxide dismutase [Cu-Zn] (158 aa).

Histidine 46, histidine 48, and histidine 63 together coordinate Cu cation. The cysteines at positions 57 and 149 are disulfide-linked. Zn(2+)-binding residues include histidine 63, histidine 71, histidine 80, and aspartate 83. Histidine 120 provides a ligand contact to Cu cation.

This sequence belongs to the Cu-Zn superoxide dismutase family. As to quaternary structure, homodimer. The cofactor is Cu cation. It depends on Zn(2+) as a cofactor.

The protein localises to the cytoplasm. The enzyme catalyses 2 superoxide + 2 H(+) = H2O2 + O2. In terms of biological role, destroys radicals which are normally produced within the cells and which are toxic to biological systems. The sequence is that of Superoxide dismutase [Cu-Zn] (SODC) from Brugia pahangi (Filarial nematode worm).